Here is a 195-residue protein sequence, read N- to C-terminus: 22.0 kDa heat shock protein (195 aa).

A signal peptide spans 1 to 21; that stretch reads MMKHLLSIFFIGALLLGNIKT. Residues 62–180 enclose the sHSP domain; the sequence is RDTSVALSPA…GPRVVNIAAE (119 aa). N-linked (GlcNAc...) asparagine glycosylation is present at asparagine 160.

This sequence belongs to the small heat shock protein (HSP20) family. As to quaternary structure, may form oligomeric structures.

It localises to the endoplasmic reticulum. This is 22.0 kDa heat shock protein (HSP22.0) from Arabidopsis thaliana (Mouse-ear cress).